Consider the following 350-residue polypeptide: MSDAVHTGWQLSEQAPLRALNTFHVEATARWLLNVHAPEALPQALAAPEIAGQPLLVLGSGSNVLLAGDPPGCVLCFDNRQTSIIAHRADHAIVRAGAGVNWHALVLYSLQQGLSGLENLALIPGTVGACPIQNIGAYGAQVGDFIHVVEAFDRHSQQFVRLDAADCAFGYRDSVFKQQPERYLIVAVEFNLPLLHELRLDYAGIREELARMGAELAGAADVAQAVINIRRRKLPDPDVLGNAGSFFKNPLLPSEQIAALQASFADMPVYPGEQAGQGKLSAAWLIEQCGWKGRREGDAGVSPEHALVLVNYGTATGAQLLDFARRIAESVRERYSVILEPEPRIIGAHW.

The 172-residue stretch at 24–195 (HVEATARWLL…VAVEFNLPLL (172 aa)) folds into the FAD-binding PCMH-type domain. Arg172 is an active-site residue. Residue Ser245 is the Proton donor of the active site. Residue Glu342 is part of the active site.

This sequence belongs to the MurB family. Requires FAD as cofactor.

Its subcellular location is the cytoplasm. It catalyses the reaction UDP-N-acetyl-alpha-D-muramate + NADP(+) = UDP-N-acetyl-3-O-(1-carboxyvinyl)-alpha-D-glucosamine + NADPH + H(+). It participates in cell wall biogenesis; peptidoglycan biosynthesis. In terms of biological role, cell wall formation. This is UDP-N-acetylenolpyruvoylglucosamine reductase from Xanthomonas euvesicatoria pv. vesicatoria (strain 85-10) (Xanthomonas campestris pv. vesicatoria).